Consider the following 280-residue polypeptide: Release factor glutamine methyltransferase (280 aa).

Residues 120–124, D143, and N186 each bind S-adenosyl-L-methionine; that span reads GTGSG. A substrate-binding site is contributed by 186 to 189; the sequence is NPPY.

The protein belongs to the protein N5-glutamine methyltransferase family. PrmC subfamily.

It carries out the reaction L-glutaminyl-[peptide chain release factor] + S-adenosyl-L-methionine = N(5)-methyl-L-glutaminyl-[peptide chain release factor] + S-adenosyl-L-homocysteine + H(+). Methylates the class 1 translation termination release factors RF1/PrfA and RF2/PrfB on the glutamine residue of the universally conserved GGQ motif. This Koribacter versatilis (strain Ellin345) protein is Release factor glutamine methyltransferase.